The primary structure comprises 291 residues: 33 kDa chaperonin (291 aa).

2 cysteine pairs are disulfide-bonded: Cys-236–Cys-238 and Cys-269–Cys-272.

It belongs to the HSP33 family. In terms of processing, under oxidizing conditions two disulfide bonds are formed involving the reactive cysteines. Under reducing conditions zinc is bound to the reactive cysteines and the protein is inactive.

The protein resides in the cytoplasm. Functionally, redox regulated molecular chaperone. Protects both thermally unfolding and oxidatively damaged proteins from irreversible aggregation. Plays an important role in the bacterial defense system toward oxidative stress. The sequence is that of 33 kDa chaperonin from Lactobacillus johnsonii (strain CNCM I-12250 / La1 / NCC 533).